Consider the following 579-residue polypeptide: Phosphatidylinositol/phosphatidylcholine transfer protein SFH9 (579 aa).

Positions 145-319 (EYEEVQQYYP…FLGGNCKCAH (175 aa)) constitute a CRAL-TRIO domain. Positions 372-419 (DMSSPDGGHVRERESHPEHDKRAQLSNQAEAVGVGRMEQSDSTSPLPN) are disordered. Residues 379–394 (GHVRERESHPEHDKRA) are compositionally biased toward basic and acidic residues. Positions 512–539 (QEKEDILRDSLDRIKSIEQDLQKTKKAL) form a coiled coil.

It belongs to the SFH family.

Its subcellular location is the golgi apparatus membrane. The protein resides in the cell membrane. Functionally, required for transport of secretory proteins from the Golgi complex. Catalyzes the transfer of phosphatidylinositol and phosphatidylcholine between membranes in vitro. This is Phosphatidylinositol/phosphatidylcholine transfer protein SFH9 (SFH9) from Arabidopsis thaliana (Mouse-ear cress).